The following is a 382-amino-acid chain: uncharacterized protein (382 aa).

12 helical membrane passes run 8 to 28 (VMLLLCGLLLLTLAIAVLNTL), 45 to 65 (MVSSSYFTGNLVGTLFTGYLI), 75 to 95 (YLASLIFAAGCVGLGVMVGFW), 102 to 122 (FIAGIGCAMIWVVVESALMCS), 131 to 151 (LLAAYMMVYYMGTFLGQLLVS), 157 to 177 (LLHVLPWVTGMILAGILPLLF), 204 to 224 (LGVNGCIISGIVLGSLYGLMP), 231 to 251 (GMANASIGFWMAVLVSAGILG), 270 to 290 (VQVFVVILGSIAMLTQAAMAP), 291 to 311 (ALFILGAAGFTLYPVAMAWAC), 325 to 345 (ALLLSYTVGSLLGPSFAAMLM), and 349 to 369 (SDNLLFIMIASVSFIYLLMLL).

It belongs to the major facilitator superfamily. YcaD (TC 2.A.1.26) family.

The protein localises to the cell inner membrane. This is an uncharacterized protein from Salmonella agona (strain SL483).